The sequence spans 404 residues: Cysteine desulfurase IscS (404 aa).

Pyridoxal 5'-phosphate contacts are provided by residues 75-76, N155, Q183, and 203-205; these read AT and SAH. K206 bears the N6-(pyridoxal phosphate)lysine mark. A pyridoxal 5'-phosphate-binding site is contributed by T243. Residue C328 is the Cysteine persulfide intermediate of the active site. C328 serves as a coordination point for [2Fe-2S] cluster.

It belongs to the class-V pyridoxal-phosphate-dependent aminotransferase family. NifS/IscS subfamily. In terms of assembly, homodimer. Forms a heterotetramer with IscU, interacts with other sulfur acceptors. The cofactor is pyridoxal 5'-phosphate.

It localises to the cytoplasm. It carries out the reaction (sulfur carrier)-H + L-cysteine = (sulfur carrier)-SH + L-alanine. It functions in the pathway cofactor biosynthesis; iron-sulfur cluster biosynthesis. Its function is as follows. Master enzyme that delivers sulfur to a number of partners involved in Fe-S cluster assembly, tRNA modification or cofactor biosynthesis. Catalyzes the removal of elemental sulfur atoms from cysteine to produce alanine. Functions as a sulfur delivery protein for Fe-S cluster synthesis onto IscU, an Fe-S scaffold assembly protein, as well as other S acceptor proteins. The chain is Cysteine desulfurase IscS from Tolumonas auensis (strain DSM 9187 / NBRC 110442 / TA 4).